Here is a 180-residue protein sequence, read N- to C-terminus: uncharacterized protein (180 aa).

Residues 1 to 22 form the signal peptide; it reads MKRSIIAAAVFSSFFMSAGVFA.

This sequence belongs to the fimbrial protein family.

Its function is as follows. Part of the yehABCD fimbrial operon. Could contribute to adhesion to various surfaces in specific environmental niches. This is an uncharacterized protein from Escherichia coli (strain K12).